A 902-amino-acid chain; its full sequence is 4-hydroxyphenylacetate decarboxylase glycyl radical subunit (902 aa).

Residues 38–774 form the PFL domain; it reads KRAEDLLDVY…ATLATPDGRL (737 aa). Ser348 and Cys507 together coordinate 4-hydroxyphenylacetate. Cys507 acts as the Cysteine radical intermediate in catalysis. Glu509 serves as the catalytic Proton donor. 4-hydroxyphenylacetate is bound by residues His540 and Glu641. The 121-residue stretch at 782–902 folds into the Glycine radical domain; sequence GSVSAYAGTD…VIARTEYEGV (121 aa). Gly877 carries the glycine radical modification.

This sequence belongs to the glycyl radical enzyme (GRE) family. HPAD subfamily. In terms of assembly, heterooctamer consisting of 4 large (HpdB) subunits and 4 small (HpdC) subunits. Also forms a catalytically inactive homodimer. Phosphorylated on serine. Phosphorylation may trigger the formation of the active heterooctamers and thereby regulates enzyme activity. Post-translationally, requires the activating protein HpdA to generate the key active site glycyl radical that is involved in catalysis.

The catalysed reaction is 4-hydroxyphenylacetate + H(+) = 4-methylphenol + CO2. The enzyme catalyses 3,4-dihydroxyphenylacetate + H(+) = 4-methylcatechol + CO2. It carries out the reaction 2-hydroxy-2-(4-hydroxyphenyl)acetate + H(+) = 4-hydroxybenzyl alcohol + CO2. Its activity is regulated as follows. Enzyme activity catalyzed by the HPA decarboxylase complex is rapidly and irreversibly inactivated by oxygen. Competitively inhibited by p-hydroxyphenylacetamide. Not inhibited by m- or o-hydroxyphenyl-acetate, p-hydroxybenzoate or p-hydroxyphenylpropionate. Its function is as follows. Glycyl radical subunit of the HPA decarboxylase that decarboxylates phenylacetates with a hydroxyl group in the p-position. Active toward 4-hydroxyphenylacetate, 3,4-dihydroxyphenylacetate and to a lesser extent p-hydroxymandelate (2-hydroxy-2-(4-hydroxyphenyl)acetate), forming 4-methylphenol, 4-methylcatechol and 4-hydroxybenzylalcohol, respectively. Is likely involved in the catabolism of aromatic amino acids such as tyrosine fermentation. 4-methylphenol (p-cresol) formation provides metabolic toxicity, which may benefit the pathogen C.difficile by suppression of the endogenous gastrointestinal microflora, allowing the development of gastrointestinal infections. The large subunit is the catalytic subunit that binds the substrate. The polypeptide is 4-hydroxyphenylacetate decarboxylase glycyl radical subunit (Clostridioides difficile (Peptoclostridium difficile)).